A 447-amino-acid chain; its full sequence is Phosphoglucosamine mutase (447 aa).

The active-site Phosphoserine intermediate is the Ser-104. Mg(2+) contacts are provided by Ser-104, Asp-243, Asp-245, and Asp-247. Position 104 is a phosphoserine (Ser-104).

The protein belongs to the phosphohexose mutase family. Mg(2+) serves as cofactor. Post-translationally, activated by phosphorylation.

It carries out the reaction alpha-D-glucosamine 1-phosphate = D-glucosamine 6-phosphate. Its function is as follows. Catalyzes the conversion of glucosamine-6-phosphate to glucosamine-1-phosphate. The protein is Phosphoglucosamine mutase of Corynebacterium jeikeium (strain K411).